Here is a 693-residue protein sequence, read N- to C-terminus: Exocyst complex component 7 (693 aa).

A Phosphoserine modification is found at Ser236. The disordered stretch occupies residues 236–259 (SWGHEALRPRHSGRQTEPKKTTSA).

It belongs to the EXO70 family. As to quaternary structure, the exocyst complex is composed of Sec3/Exoc1, Sec5/Exoc2, Sec6/Exoc3, Sec8/Exoc4, Sec10/Exoc5, Sec15/Exoc6, Exo70/Exoc7 and Exo84/Exoc8.

Functionally, required for exocytosis. Thought to function in intracellular vesicle targeting and docking before SNARE complex formation. This Drosophila melanogaster (Fruit fly) protein is Exocyst complex component 7.